The following is a 699-amino-acid chain: DNA topoisomerase 1 (699 aa).

Basic and acidic residues-rich tracts occupy residues 1–15 and 22–35; these read MAKSKVVEKDKKNEL and IELKGQSKNEESKG. Positions 1 to 37 are disordered; sequence MAKSKVVEKDKKNELDNQSADIELKGQSKNEESKGGK. A Toprim domain is found at 38-146; sequence KKVIIVESPA…NIITFTEITE (109 aa). Mg(2+) contacts are provided by E44 and D115. Residues 160–583 enclose the Topo IA-type catalytic domain; the sequence is DMNKVNAQLA…SFLKEFNKDL (424 aa). Residues 194–199 form an interaction with DNA region; the sequence is SAGRVQ. Catalysis depends on Y324, which acts as the O-(5'-phospho-DNA)-tyrosine intermediate. Residues 601–624 form a C4-type zinc finger; that stretch reads CEDCSGNYKLKVGKYGLYLHCPNC. Residues 649 to 699 form a disordered region; that stretch reads QESQEENGEKNSVQSEESSANSGNRKFYRKRRTSGSKKSSTKSASSKAKKK. A compositionally biased stretch (polar residues) spans 661–672; it reads VQSEESSANSGN. The segment covering 674-683 has biased composition (basic residues); the sequence is KFYRKRRTSG. Residues 684-699 show a composition bias toward low complexity; that stretch reads SKKSSTKSASSKAKKK.

This sequence belongs to the type IA topoisomerase family. Monomer. The cofactor is Mg(2+).

It carries out the reaction ATP-independent breakage of single-stranded DNA, followed by passage and rejoining.. Releases the supercoiling and torsional tension of DNA, which is introduced during the DNA replication and transcription, by transiently cleaving and rejoining one strand of the DNA duplex. Introduces a single-strand break via transesterification at a target site in duplex DNA. The scissile phosphodiester is attacked by the catalytic tyrosine of the enzyme, resulting in the formation of a DNA-(5'-phosphotyrosyl)-enzyme intermediate and the expulsion of a 3'-OH DNA strand. The free DNA strand then undergoes passage around the unbroken strand, thus removing DNA supercoils. Finally, in the religation step, the DNA 3'-OH attacks the covalent intermediate to expel the active-site tyrosine and restore the DNA phosphodiester backbone. This chain is DNA topoisomerase 1, found in Fervidobacterium islandicum.